The chain runs to 335 residues: Glycerol-3-phosphate dehydrogenase [NAD(P)+] (335 aa).

3 residues coordinate NADPH: Ser-12, Trp-13, and Lys-107. Sn-glycerol 3-phosphate contacts are provided by Lys-107, Gly-138, and Ser-140. Ala-142 is an NADPH binding site. Residues Lys-193, Asp-246, Ser-256, Arg-257, and Asn-258 each coordinate sn-glycerol 3-phosphate. The active-site Proton acceptor is the Lys-193. Arg-257 serves as a coordination point for NADPH. Positions 281 and 283 each coordinate NADPH.

Belongs to the NAD-dependent glycerol-3-phosphate dehydrogenase family.

Its subcellular location is the cytoplasm. It carries out the reaction sn-glycerol 3-phosphate + NAD(+) = dihydroxyacetone phosphate + NADH + H(+). The enzyme catalyses sn-glycerol 3-phosphate + NADP(+) = dihydroxyacetone phosphate + NADPH + H(+). It participates in membrane lipid metabolism; glycerophospholipid metabolism. Catalyzes the reduction of the glycolytic intermediate dihydroxyacetone phosphate (DHAP) to sn-glycerol 3-phosphate (G3P), the key precursor for phospholipid synthesis. The protein is Glycerol-3-phosphate dehydrogenase [NAD(P)+] of Geobacter sulfurreducens (strain ATCC 51573 / DSM 12127 / PCA).